The sequence spans 451 residues: PTS system cellobiose-specific EIIC component (451 aa).

Residues 8-423 enclose the PTS EIIC type-3 domain; that stretch reads LEDRVMPVAG…FIAFAIYYPF (416 aa). 10 helical membrane passes run 31–51, 72–92, 104–124, 138–158, 187–207, 227–247, 250–270, 293–313, 347–367, and 407–427; these read GIIL…VGFL, LLYP…FGVA, LSAG…QVPF, GIPV…LAIV, FVAL…RLIL, LSVL…VQLL, TGLH…LSLM, FFDL…ALTM, IVMN…LVVV, and ILQI…FSIW.

It localises to the cell membrane. The phosphoenolpyruvate-dependent sugar phosphotransferase system (sugar PTS), a major carbohydrate active transport system, catalyzes the phosphorylation of incoming sugar substrates concomitantly with their translocation across the cell membrane. The enzyme II CelABD PTS system is involved in cellobiose transport. The polypeptide is PTS system cellobiose-specific EIIC component (Geobacillus stearothermophilus (Bacillus stearothermophilus)).